Consider the following 423-residue polypeptide: Immunity-related GTPase family M protein 3 (423 aa).

Residues 83–260 (YRVKIAVTGD…PELRNTLQKD (178 aa)) form the IRG-type G domain. GTP-binding positions include 92 to 99 (DSGNGMSS), 117 to 121 (TGVVR), and 200 to 202 (KLD).

The protein belongs to the TRAFAC class dynamin-like GTPase superfamily. IRG family.

The protein resides in the endoplasmic reticulum. It localises to the cytoplasmic vesicle membrane. It is found in the lipid droplet. The catalysed reaction is GTP + H2O = GDP + phosphate + H(+). Its function is as follows. Immunity-related GTPase that plays important roles in host resistance to acute infection by protozoan, such as Toxoplasma gondii and Leishmania major. Acts as a dynamin-like protein that binds to intracellular membranes and promotes remodeling and trafficking of those membranes. Acts predominantly to restrict acute protozoan infection: expression is required in both hematopoietic and non-hematopoietic cellular compartments and is dependent on Stat1. Only plays a partial role in the control of latent Toxoplasma infection. Involved in the clearance of acute protozoan infections by regulating autophagy, possibly by promoting the fusion of phagosomes with lysosomes for efficient degradation of vacuoles containing parasites. Probably involved in membrane disruption of parasite-containing vacuoles. In addition to its role in resistance to acute infection by protozoan, also acts as a negative regulator of the integrated stress response (ISR) following coxsackievirus B3 infection. Promotes differentiation of activated CD8(+) T-cells. In Mus musculus (Mouse), this protein is Immunity-related GTPase family M protein 3.